We begin with the raw amino-acid sequence, 113 residues long: Nucleoid-associated protein Syncc9902_0023 (113 aa).

Belongs to the YbaB/EbfC family. In terms of assembly, homodimer.

It localises to the cytoplasm. It is found in the nucleoid. Functionally, binds to DNA and alters its conformation. May be involved in regulation of gene expression, nucleoid organization and DNA protection. The polypeptide is Nucleoid-associated protein Syncc9902_0023 (Synechococcus sp. (strain CC9902)).